Reading from the N-terminus, the 212-residue chain is MVESVVKNWQGEQVGETTFELRVAKEETASHIVHRALVRQLTNARQGNASTKTRAEVRGGGRKPWRQKGTGRARAGSIRSPLWRGGGVIFGPKPRDFDLKLNRKERRLALRTAFVGRIDDLIVVEEFSTELSRPKTKDLVAALARWGVVPESKALLILSEIADTDNVYLSARNIENLKLIAANQLNVFDLLHADKIVVTASALEKIQEVYSA.

Positions 45 to 71 (RQGNASTKTRAEVRGGGRKPWRQKGTG) are disordered. A compositionally biased stretch (basic residues) spans 60–71 (GGRKPWRQKGTG).

Belongs to the universal ribosomal protein uL4 family. As to quaternary structure, part of the 50S ribosomal subunit.

One of the primary rRNA binding proteins, this protein initially binds near the 5'-end of the 23S rRNA. It is important during the early stages of 50S assembly. It makes multiple contacts with different domains of the 23S rRNA in the assembled 50S subunit and ribosome. In terms of biological role, forms part of the polypeptide exit tunnel. This chain is Large ribosomal subunit protein uL4, found in Nostoc punctiforme (strain ATCC 29133 / PCC 73102).